Consider the following 595-residue polypeptide: Adenine deaminase 2 (595 aa).

It belongs to the metallo-dependent hydrolases superfamily. Adenine deaminase family. Mn(2+) is required as a cofactor.

The enzyme catalyses adenine + H2O + H(+) = hypoxanthine + NH4(+). The chain is Adenine deaminase 2 from Rhizobium johnstonii (strain DSM 114642 / LMG 32736 / 3841) (Rhizobium leguminosarum bv. viciae).